An 859-amino-acid chain; its full sequence is MQEQYTPSEIEAKVQQHWQDTKTFEVTEDENKEKFYCLSMFPYPSGRLHMGHVRNYTIGDVVSRYQRLQGKNVLQPIGWDSFGLPAENAAIKNNTAPAPWTYENIDYMKNQLKMLGFGYDWSREIATCTPEYYRWEQWFFTKLYEKGLVYKKTSSVNWCPNDETVLANEQVIDGCCWRCDTTVEQKEIPQWFIKITEYAEELLNDIDTLEEWPEQVKTMQRNWIGRSEGIEMTFQVAGSDQSFDIYTTRPDTVMGVTYVAIAAGHPLAEQAAINNPALVEFIEECKNADTTEAAMAAMEKKGVATGLNAIHPITGKEVPIWVGNFVLMNYGTGAVMSVPAHDQRDYEFAKKYGLNIEAVIKPVDGEVDISEEAYTEKGVLFNSAEFDGLDFQAAFDAIDAKLTAEGKGKRQVNFRLRDWGVSRQRYWGAPIPMVTLADGTVMPTPEDQLPVILPEDVVMDGIQSPIKSDKEWAKTTINGQEAFRETDTFDTFMESSWYYARYCSPHADEMLDPAKANYWLPVDQYIGGIEHACMHLLYFRFFHKLLRDTGLVNSNEPAKRLLTQGMVLADAYYYNNEKGARVWVAPSDVTVQETDDKGRTVKAVDSEGHELVYTGMSKMSKSKNNGIDPQEMVDKYGADTVRLFMMFAAPPELTLEWQESSVEGAHRFIKRLWKTAHDHIANGTTAELDVKSLNAAQKELRRELHKTIAKVGDDIERRQMFNTAIASIMELMNRLQKAPSETDQDKALMQEALNAVIRLLYPIIPHTCFVLWNELGNQGAIEEVLWPEVDESALVEDSKLIIVQVNGKLRAKITVAADASKEEVEAAGMAEEGVVKHTEDKTVRKVIYVPGKLLNIVAN.

The 'HIGH' region motif lies at P42–H52. The 'KMSKS' region signature appears at K618 to S622. K621 lines the ATP pocket.

Belongs to the class-I aminoacyl-tRNA synthetase family.

Its subcellular location is the cytoplasm. The catalysed reaction is tRNA(Leu) + L-leucine + ATP = L-leucyl-tRNA(Leu) + AMP + diphosphate. In Shewanella pealeana (strain ATCC 700345 / ANG-SQ1), this protein is Leucine--tRNA ligase.